The chain runs to 166 residues: Large ribosomal subunit protein uL10 (166 aa).

This sequence belongs to the universal ribosomal protein uL10 family. As to quaternary structure, part of the ribosomal stalk of the 50S ribosomal subunit. The N-terminus interacts with L11 and the large rRNA to form the base of the stalk. The C-terminus forms an elongated spine to which L12 dimers bind in a sequential fashion forming a multimeric L10(L12)X complex.

Its function is as follows. Forms part of the ribosomal stalk, playing a central role in the interaction of the ribosome with GTP-bound translation factors. In Marinomonas sp. (strain MWYL1), this protein is Large ribosomal subunit protein uL10.